Reading from the N-terminus, the 160-residue chain is MNRVLYPGTFDPITKGHGDLVERAARLFDHVIIAVAASPKKNPLFPLEQRVELAREVTKHLPNVEVVGFSSLLAHFVKEQGANVFLRGLRAVSDFEYEFQLANMNRQLAPDVESLFLTPSEKYSFISSTLVREIAALGGDISKFVHPAVADALNARFQKN.

Residue Thr9 coordinates substrate. ATP contacts are provided by residues 9 to 10 and His17; that span reads TF. Substrate-binding residues include Lys41, Leu73, and Arg87. Residues 88–90, Glu98, and 123–129 each bind ATP; these read GLR and YSFISST.

The protein belongs to the bacterial CoaD family. In terms of assembly, homohexamer. Mg(2+) serves as cofactor.

It localises to the cytoplasm. It catalyses the reaction (R)-4'-phosphopantetheine + ATP + H(+) = 3'-dephospho-CoA + diphosphate. The protein operates within cofactor biosynthesis; coenzyme A biosynthesis; CoA from (R)-pantothenate: step 4/5. Its function is as follows. Reversibly transfers an adenylyl group from ATP to 4'-phosphopantetheine, yielding dephospho-CoA (dPCoA) and pyrophosphate. The polypeptide is Phosphopantetheine adenylyltransferase (Ectopseudomonas mendocina (strain ymp) (Pseudomonas mendocina)).